Here is a 649-residue protein sequence, read N- to C-terminus: MLTTESPTTTTTTTTTTTSSPSSDIRDKFIFGNLEVKVKEVKGCQLHFLNVKCELALKKTEIKTKPLANHTFFDVFSFRVSAATSELEIEAWKKNFLFKDKMTGSLTIPINDLLHANGEAKWYPLSNKKPRSSRVKKENITNSNNKDNNTASPSSPDEAQEKGDEDQHHSADESPAEETSPTTGRPRSVSMPAKKVKAAPEICLEIKFVLNEPPKEVLKGIVLDGVWNSENNFGSLINNPHWIKCTQYLLSIKDEITPITLKLRQPEGTDQRCSFFVINYDPFYNGSKKVILDTTNDIKKVSSFNSPIPATSVDCKIDLEPGQYCIIPYAESFAFSGTYKFNLDSEKLDNCEFYALPKSQEQAWNEITVDGLWTTATNGGGDINILGWTKNPQYSFTLTKKSRACVLLSQDDNDKSVGFYVIKQLDAGKRAIEFREQVGKTESFKFSCSTGCTLTLDEGTYIVIPSTYDHGIEGAFHLTLFTDDKNATFQPLTNAFQEVEQVKGTWVGKSAGGSPNQPTFFNNPQFHLKVPASDKDEVIAVQLIQDSTIADEGIGFIVLSRDSHSEPLTAQDFQNEMVFTKTSNWEKRNDIVCRLHVKPESPREFTIIPSTFDPSVNRSFKLQVYSDVSISLDEIEQKDESSDSEQNDD.

Positions 1 to 3 (MLT) are excised as a propeptide. Disordered regions lie at residues 1 to 22 (MLTTESPTTTTTTTTTTTSSPS) and 124 to 193 (PLSN…SMPA). Residues 15–123 (TTTTSSPSSD…LHANGEAKWY (109 aa)) enclose the C2 domain. Over residues 140 to 149 (ITNSNNKDNN) the composition is skewed to low complexity. The span at 159 to 172 (AQEKGDEDQHHSAD) shows a compositional bias: basic and acidic residues. Domain III regions lie at residues 458 to 489 (EGTYIVIPSTYDHGIEGAFHLTLFTDDKNATF) and 498 to 633 (EVEQ…ISLD).

The protein belongs to the peptidase C2 family. Monomer. Undergoes autolytic cleavage between Pro-192 and Ala-193.

It is found in the cytoplasm. The protein resides in the cytosol. Functionally, has a weak caseinolytic activity. In Dictyostelium discoideum (Social amoeba), this protein is Putative calpain-like cysteine protease A (cplA).